The chain runs to 420 residues: ATP phosphoribosyltransferase regulatory subunit (420 aa).

This sequence belongs to the class-II aminoacyl-tRNA synthetase family. HisZ subfamily. Heteromultimer composed of HisG and HisZ subunits.

It is found in the cytoplasm. It functions in the pathway amino-acid biosynthesis; L-histidine biosynthesis; L-histidine from 5-phospho-alpha-D-ribose 1-diphosphate: step 1/9. Its function is as follows. Required for the first step of histidine biosynthesis. May allow the feedback regulation of ATP phosphoribosyltransferase activity by histidine. This is ATP phosphoribosyltransferase regulatory subunit from Bacillus mycoides (strain KBAB4) (Bacillus weihenstephanensis).